We begin with the raw amino-acid sequence, 313 residues long: Proline iminopeptidase (313 aa).

An AB hydrolase-1 domain is found at 35 to 298 (KPVVILHGGP…TPGAGHSAFE (264 aa)). S110 serves as the catalytic Nucleophile. D266 is a catalytic residue. The active-site Proton donor is H294.

The protein belongs to the peptidase S33 family.

The protein localises to the cytoplasm. It carries out the reaction Release of N-terminal proline from a peptide.. Functionally, specifically catalyzes the removal of N-terminal proline residues from peptides. The polypeptide is Proline iminopeptidase (pip) (Xylella fastidiosa (strain 9a5c)).